The chain runs to 308 residues: Protoheme IX farnesyltransferase (308 aa).

8 helical membrane-spanning segments follow: residues 31 to 51 (VIELLLVTTIPAMLLADRGTV), 53 to 73 (PLLILNTLVGGMLAAAGANTL), 102 to 122 (HALIFGLVLTVTSFCWLWLST), 124 to 144 (LLSGLLAVATIAFYVFVYTML), 149 to 169 (TSQNVVWGGAAGCMPVMIGWS), 170 to 190 (AVTGTIQWPALVMFLIIFFWT), 242 to 262 (LATGWLYGAVALLAGAWFLVM), and 288 to 308 (YLAVVFCALAIDSALALPTLL).

Belongs to the UbiA prenyltransferase family. Protoheme IX farnesyltransferase subfamily.

It is found in the cell membrane. The enzyme catalyses heme b + (2E,6E)-farnesyl diphosphate + H2O = Fe(II)-heme o + diphosphate. Its pathway is porphyrin-containing compound metabolism; heme O biosynthesis; heme O from protoheme: step 1/1. Converts heme B (protoheme IX) to heme O by substitution of the vinyl group on carbon 2 of heme B porphyrin ring with a hydroxyethyl farnesyl side group. This Mycolicibacterium smegmatis (strain ATCC 700084 / mc(2)155) (Mycobacterium smegmatis) protein is Protoheme IX farnesyltransferase.